Reading from the N-terminus, the 268-residue chain is Tryptophan synthase alpha chain (268 aa).

Residues glutamate 49 and aspartate 60 each act as proton acceptor in the active site.

This sequence belongs to the TrpA family. Tetramer of two alpha and two beta chains.

The enzyme catalyses (1S,2R)-1-C-(indol-3-yl)glycerol 3-phosphate + L-serine = D-glyceraldehyde 3-phosphate + L-tryptophan + H2O. It participates in amino-acid biosynthesis; L-tryptophan biosynthesis; L-tryptophan from chorismate: step 5/5. The alpha subunit is responsible for the aldol cleavage of indoleglycerol phosphate to indole and glyceraldehyde 3-phosphate. This chain is Tryptophan synthase alpha chain, found in Sodalis glossinidius (strain morsitans).